The sequence spans 138 residues: Translation initiation factor 2 subunit beta (138 aa).

This sequence belongs to the eIF-2-beta/eIF-5 family. Heterotrimer composed of an alpha, a beta and a gamma chain.

Functionally, eIF-2 functions in the early steps of protein synthesis by forming a ternary complex with GTP and initiator tRNA. This is Translation initiation factor 2 subunit beta from Methanococcus maripaludis (strain C6 / ATCC BAA-1332).